We begin with the raw amino-acid sequence, 41 residues long: Large ribosomal subunit protein bL36 (41 aa).

The protein belongs to the bacterial ribosomal protein bL36 family.

The chain is Large ribosomal subunit protein bL36 from Granulibacter bethesdensis (strain ATCC BAA-1260 / CGDNIH1).